Here is a 156-residue protein sequence, read N- to C-terminus: Small ribosomal subunit protein uS7 (156 aa).

The protein belongs to the universal ribosomal protein uS7 family. As to quaternary structure, part of the 30S ribosomal subunit. Contacts proteins S9 and S11.

One of the primary rRNA binding proteins, it binds directly to 16S rRNA where it nucleates assembly of the head domain of the 30S subunit. Is located at the subunit interface close to the decoding center, probably blocks exit of the E-site tRNA. This chain is Small ribosomal subunit protein uS7, found in Staphylococcus carnosus (strain TM300).